A 257-amino-acid polypeptide reads, in one-letter code: Putative phosphatase YkrA (257 aa).

Catalysis depends on aspartate 9, which acts as the Nucleophile. A Mg(2+)-binding site is contributed by aspartate 9. Position 10 (isoleucine 10) interacts with phosphate. Residue aspartate 11 participates in Mg(2+) binding. Phosphate is bound by residues 43–44 and lysine 183; that span reads SG. Residue aspartate 206 coordinates Mg(2+). Asparagine 209 contacts phosphate.

This sequence belongs to the HAD-like hydrolase superfamily. Cof family. Requires Mg(2+) as cofactor.

This chain is Putative phosphatase YkrA (ykrA), found in Bacillus subtilis (strain 168).